The chain runs to 396 residues: Ribosomal RNA large subunit methyltransferase I (396 aa).

The PUA domain occupies 2-81 (TVRLILAKGR…EVIDCAFFIR (80 aa)).

The protein belongs to the methyltransferase superfamily. RlmI family.

Its subcellular location is the cytoplasm. It catalyses the reaction cytidine(1962) in 23S rRNA + S-adenosyl-L-methionine = 5-methylcytidine(1962) in 23S rRNA + S-adenosyl-L-homocysteine + H(+). Functionally, specifically methylates the cytosine at position 1962 (m5C1962) of 23S rRNA. This is Ribosomal RNA large subunit methyltransferase I from Yersinia pseudotuberculosis serotype O:1b (strain IP 31758).